The following is a 256-amino-acid chain: Leucyl/phenylalanyl-tRNA--protein transferase (256 aa).

A disordered region spans residues 1–21; it reads MIPWLPDDSDSAPFPPTRLAL.

The protein belongs to the L/F-transferase family.

The protein resides in the cytoplasm. It carries out the reaction N-terminal L-lysyl-[protein] + L-leucyl-tRNA(Leu) = N-terminal L-leucyl-L-lysyl-[protein] + tRNA(Leu) + H(+). The catalysed reaction is N-terminal L-arginyl-[protein] + L-leucyl-tRNA(Leu) = N-terminal L-leucyl-L-arginyl-[protein] + tRNA(Leu) + H(+). The enzyme catalyses L-phenylalanyl-tRNA(Phe) + an N-terminal L-alpha-aminoacyl-[protein] = an N-terminal L-phenylalanyl-L-alpha-aminoacyl-[protein] + tRNA(Phe). Functionally, functions in the N-end rule pathway of protein degradation where it conjugates Leu, Phe and, less efficiently, Met from aminoacyl-tRNAs to the N-termini of proteins containing an N-terminal arginine or lysine. The polypeptide is Leucyl/phenylalanyl-tRNA--protein transferase (Leptothrix cholodnii (strain ATCC 51168 / LMG 8142 / SP-6) (Leptothrix discophora (strain SP-6))).